The following is a 220-amino-acid chain: Probable septum site-determining protein MinC (220 aa).

Belongs to the MinC family. Interacts with MinD and FtsZ.

In terms of biological role, cell division inhibitor that blocks the formation of polar Z ring septums. Rapidly oscillates between the poles of the cell to destabilize FtsZ filaments that have formed before they mature into polar Z rings. Prevents FtsZ polymerization. In Prochlorococcus marinus subsp. pastoris (strain CCMP1986 / NIES-2087 / MED4), this protein is Probable septum site-determining protein MinC.